Here is an 80-residue protein sequence, read N- to C-terminus: Exodeoxyribonuclease 7 small subunit (80 aa).

This sequence belongs to the XseB family. As to quaternary structure, heterooligomer composed of large and small subunits.

The protein resides in the cytoplasm. It catalyses the reaction Exonucleolytic cleavage in either 5'- to 3'- or 3'- to 5'-direction to yield nucleoside 5'-phosphates.. Functionally, bidirectionally degrades single-stranded DNA into large acid-insoluble oligonucleotides, which are then degraded further into small acid-soluble oligonucleotides. The chain is Exodeoxyribonuclease 7 small subunit from Maridesulfovibrio salexigens (strain ATCC 14822 / DSM 2638 / NCIMB 8403 / VKM B-1763) (Desulfovibrio salexigens).